A 365-amino-acid chain; its full sequence is Aminomethyltransferase (365 aa).

This sequence belongs to the GcvT family. In terms of assembly, the glycine cleavage system is composed of four proteins: P, T, L and H.

It carries out the reaction N(6)-[(R)-S(8)-aminomethyldihydrolipoyl]-L-lysyl-[protein] + (6S)-5,6,7,8-tetrahydrofolate = N(6)-[(R)-dihydrolipoyl]-L-lysyl-[protein] + (6R)-5,10-methylene-5,6,7,8-tetrahydrofolate + NH4(+). Functionally, the glycine cleavage system catalyzes the degradation of glycine. This chain is Aminomethyltransferase, found in Yersinia pseudotuberculosis serotype O:1b (strain IP 31758).